The chain runs to 125 residues: S-adenosylmethionine decarboxylase proenzyme (125 aa).

Ser-63 (schiff-base intermediate with substrate; via pyruvic acid) is an active-site residue. Position 63 is a pyruvic acid (Ser); by autocatalysis (Ser-63). The active-site Proton acceptor; for processing activity is His-68. The active-site Proton donor; for catalytic activity is the Cys-83.

Belongs to the prokaryotic AdoMetDC family. Type 1 subfamily. In terms of assembly, heterotetramer of two alpha and two beta chains arranged as a dimer of alpha/beta heterodimers. Pyruvate serves as cofactor. Post-translationally, is synthesized initially as an inactive proenzyme. Formation of the active enzyme involves a self-maturation process in which the active site pyruvoyl group is generated from an internal serine residue via an autocatalytic post-translational modification. Two non-identical subunits are generated from the proenzyme in this reaction, and the pyruvate is formed at the N-terminus of the alpha chain, which is derived from the carboxyl end of the proenzyme. The post-translation cleavage follows an unusual pathway, termed non-hydrolytic serinolysis, in which the side chain hydroxyl group of the serine supplies its oxygen atom to form the C-terminus of the beta chain, while the remainder of the serine residue undergoes an oxidative deamination to produce ammonia and the pyruvoyl group blocking the N-terminus of the alpha chain.

The enzyme catalyses S-adenosyl-L-methionine + H(+) = S-adenosyl 3-(methylsulfanyl)propylamine + CO2. It functions in the pathway amine and polyamine biosynthesis; S-adenosylmethioninamine biosynthesis; S-adenosylmethioninamine from S-adenosyl-L-methionine: step 1/1. Functionally, catalyzes the decarboxylation of S-adenosylmethionine to S-adenosylmethioninamine (dcAdoMet), the propylamine donor required for the synthesis of the polyamines spermine and spermidine from the diamine putrescine. The polypeptide is S-adenosylmethionine decarboxylase proenzyme (Moorella thermoacetica (strain ATCC 39073 / JCM 9320)).